We begin with the raw amino-acid sequence, 322 residues long: MKKIAVLTSGGDSPGMNAAVRAVTRTAIYNNIEVYGVYQGYQGLLDDDIHKLELGSVGDTIQRGGTFLFSARCPQFKEEDVRKKAIENLRKRGIEGLVVIGGDGSYRGAQRISEECKEIQTIGIPGTIDNDINGTDFTIGFDTALNTIIESVDKIRDTASSHARTFIVEVMGRDCGDLALWAGLSVGAETIVLPEVNTDIKDVAEKIEQGIKRGKKHSIVMVAEGCMSGQECADELTKYINIDTRVSVLGHIQRGGSPSGADRVLASRLGGYAVELLKQGETAKGVGIRNNQLTSTPFDEIFAESDRKFNSQMYELAKELSI.

Gly-11 is a binding site for ATP. 21–25 (RAVTR) lines the ADP pocket. Residues 72 to 73 (RC) and 102 to 105 (GDGS) each bind ATP. Mg(2+) is bound at residue Asp-103. 127–129 (TID) provides a ligand contact to substrate. Asp-129 (proton acceptor) is an active-site residue. Arg-156 contacts ADP. Residues Arg-164 and 171–173 (MGR) each bind substrate. ADP-binding positions include 187-189 (GAE), Arg-213, and 215-217 (KKH). Residues Glu-224, Arg-245, and 251-254 (HIQR) contribute to the substrate site.

This sequence belongs to the phosphofructokinase type A (PFKA) family. ATP-dependent PFK group I subfamily. Prokaryotic clade 'B1' sub-subfamily. Homotetramer. Requires Mg(2+) as cofactor.

It is found in the cytoplasm. It catalyses the reaction beta-D-fructose 6-phosphate + ATP = beta-D-fructose 1,6-bisphosphate + ADP + H(+). Its pathway is carbohydrate degradation; glycolysis; D-glyceraldehyde 3-phosphate and glycerone phosphate from D-glucose: step 3/4. Allosterically activated by ADP and other diphosphonucleosides, and allosterically inhibited by phosphoenolpyruvate. Catalyzes the phosphorylation of D-fructose 6-phosphate to fructose 1,6-bisphosphate by ATP, the first committing step of glycolysis. The polypeptide is ATP-dependent 6-phosphofructokinase (Staphylococcus epidermidis (strain ATCC 12228 / FDA PCI 1200)).